Reading from the N-terminus, the 225-residue chain is Glutathione S-transferase Mu 5 (225 aa).

One can recognise a GST N-terminal domain in the interval 5 to 92 (KSMVLGYWDI…YIARKHNMCG (88 aa)). Ser-6 is modified (phosphoserine). Glutathione-binding positions include 11 to 12 (YW), 50 to 54 (WLDVK), 63 to 64 (NL), and 76 to 77 (QS). The 119-residue stretch at 94 to 212 (TEEEKIRVDI…QSDRCFKMPI (119 aa)) folds into the GST C-terminal domain. Residue Tyr-120 participates in substrate binding.

Belongs to the GST superfamily. Mu family. As to quaternary structure, homodimer. Post-translationally, the N-terminus is blocked. As to expression, expressed in testis and brain. Very low expression in liver, kidney, heart and lung.

Its subcellular location is the cytoplasm. It catalyses the reaction RX + glutathione = an S-substituted glutathione + a halide anion + H(+). Conjugation of reduced glutathione to a wide number of exogenous and endogenous hydrophobic electrophiles. The protein is Glutathione S-transferase Mu 5 (Gstm5) of Rattus norvegicus (Rat).